Here is a 140-residue protein sequence, read N- to C-terminus: Holo-[acyl-carrier-protein] synthase (140 aa).

Mg(2+) is bound by residues Asp-8 and Glu-57.

This sequence belongs to the P-Pant transferase superfamily. AcpS family. Mg(2+) is required as a cofactor.

It is found in the cytoplasm. It carries out the reaction apo-[ACP] + CoA = holo-[ACP] + adenosine 3',5'-bisphosphate + H(+). Functionally, transfers the 4'-phosphopantetheine moiety from coenzyme A to a Ser of acyl-carrier-protein. This Beijerinckia indica subsp. indica (strain ATCC 9039 / DSM 1715 / NCIMB 8712) protein is Holo-[acyl-carrier-protein] synthase.